Consider the following 208-residue polypeptide: Histone H1t (208 aa).

Residues 1–16 (MSETVPAASAGAVPAV) are compositionally biased toward low complexity. A disordered region spans residues 1 to 40 (MSETVPAASAGAVPAVMEKPLTKKRGKKPAGLTSASRKAP). Phosphoserine is present on serine 9. Residues 40-113 (PNLSVSKLIT…GASGSFKLSK (74 aa)) enclose the H15 domain. A Citrulline modification is found at arginine 58. The disordered stretch occupies residues 102–208 (GTGASGSFKL…ANIRKATSRK (107 aa)). Residues 111 to 136 (LSKKVLPKSTRRKANKSASAKTKKLV) are compositionally biased toward basic residues. Serine 143 carries the phosphoserine modification. The span at 148–157 (KTNKRAKKPR) shows a compositional bias: basic residues. Position 159 is a phosphothreonine (threonine 159). A compositionally biased stretch (basic residues) spans 163-175 (KAVRSGRKAKGAK). Residues serine 167 and serine 182 each carry the phosphoserine modification. Residues 187-208 (RATKPKLTQHHKANIRKATSRK) show a composition bias toward basic residues.

The protein belongs to the histone H1/H5 family. In terms of processing, phosphorylated in early spermatids. Citrullination at Arg-58 (H1R54ci) by PADI4 takes place within the DNA-binding site of H1 and results in its displacement from chromatin and global chromatin decondensation, thereby promoting pluripotency and stem cell maintenance.

In terms of biological role, testis-specific histone H1 that forms less compacted chromatin compared to other H1 histone subtypes. Formation of more relaxed chromatin may be required to promote chromatin architecture required for proper chromosome regulation during meiosis, such as homologous recombination. Histones H1 act as linkers that bind to nucleosomes and compact polynucleosomes into a higher-order chromatin configuration. In Macaca mulatta (Rhesus macaque), this protein is Histone H1t.